The primary structure comprises 110 residues: Eukaryotic translation initiation factor eIF1 (110 aa).

Belongs to the SUI1 family.

Its function is as follows. Probably involved in translation. The sequence is that of Eukaryotic translation initiation factor eIF1 from Anopheles gambiae (African malaria mosquito).